The sequence spans 842 residues: Ionotropic receptor 21a (842 aa).

An N-terminal signal peptide occupies residues 1–15; it reads MSYYWVALVLFTAQA. Residue Asn-325 is glycosylated (N-linked (GlcNAc...) asparagine). 2 consecutive transmembrane segments (helical) span residues 405–425 and 437–457; these read WPVW…IVFT and WGEV…AFSF. N-linked (GlcNAc...) asparagine glycosylation is present at Asn-469. The helical transmembrane segment at 479–499 threads the bilayer; the sequence is WLFTIIITSCYTGSIIAFVTL. 4 N-linked (GlcNAc...) asparagine glycosylation sites follow: Asn-533, Asn-558, Asn-583, and Asn-588. The chain crosses the membrane as a helical span at residues 680-700; sequence MFLLMALGYFLGATALVSEIV. Residues 722 to 745 are disordered; the sequence is WSSASSGSMLRTNAEQLSHDKRKA. 2 N-linked (GlcNAc...) asparagine glycosylation sites follow: Asn-765 and Asn-797.

It belongs to the glutamate-gated ion channel (TC 1.A.10.1) family. As to expression, expressed in the dorsal organ cool cells. In the antenna, expressed in approximately six neurons in the arista as well as five to ten neurons near the third chamber of the sacculus.

The protein resides in the cell membrane. In terms of biological role, integral part of a neural sensory system in the antenna that provides the neural basis for the response to environmental changes in temperature (thermosensation). Together with Ir25a and Ir93a, mediates the response of the dorsal organ cool cells, a trio of cool-responsive neurons, to cooling and is required for cool avoidance behavior. In Drosophila melanogaster (Fruit fly), this protein is Ionotropic receptor 21a.